Reading from the N-terminus, the 279-residue chain is Dermonecrotic toxin LspiSicTox-betaIE3i (279 aa).

Residue His5 is part of the active site. Mg(2+) is bound by residues Glu25 and Asp27. The active-site Nucleophile is the His41. 2 disulfide bridges follow: Cys45–Cys51 and Cys47–Cys190. Asp85 provides a ligand contact to Mg(2+).

Belongs to the arthropod phospholipase D family. Class II subfamily. Requires Mg(2+) as cofactor. In terms of tissue distribution, expressed by the venom gland.

Its subcellular location is the secreted. It catalyses the reaction an N-(acyl)-sphingosylphosphocholine = an N-(acyl)-sphingosyl-1,3-cyclic phosphate + choline. The enzyme catalyses an N-(acyl)-sphingosylphosphoethanolamine = an N-(acyl)-sphingosyl-1,3-cyclic phosphate + ethanolamine. The catalysed reaction is a 1-acyl-sn-glycero-3-phosphocholine = a 1-acyl-sn-glycero-2,3-cyclic phosphate + choline. It carries out the reaction a 1-acyl-sn-glycero-3-phosphoethanolamine = a 1-acyl-sn-glycero-2,3-cyclic phosphate + ethanolamine. Its function is as follows. Dermonecrotic toxins cleave the phosphodiester linkage between the phosphate and headgroup of certain phospholipids (sphingolipid and lysolipid substrates), forming an alcohol (often choline) and a cyclic phosphate. This toxin acts on sphingomyelin (SM). It may also act on ceramide phosphoethanolamine (CPE), lysophosphatidylcholine (LPC) and lysophosphatidylethanolamine (LPE), but not on lysophosphatidylserine (LPS), and lysophosphatidylglycerol (LPG). It acts by transphosphatidylation, releasing exclusively cyclic phosphate products as second products. Induces dermonecrosis, hemolysis, increased vascular permeability, edema, inflammatory response, and platelet aggregation. The chain is Dermonecrotic toxin LspiSicTox-betaIE3i from Loxosceles spinulosa (Recluse spider).